A 231-amino-acid chain; its full sequence is Large ribosomal subunit protein uL1 (231 aa).

It belongs to the universal ribosomal protein uL1 family. In terms of assembly, part of the 50S ribosomal subunit.

Binds directly to 23S rRNA. The L1 stalk is quite mobile in the ribosome, and is involved in E site tRNA release. Its function is as follows. Protein L1 is also a translational repressor protein, it controls the translation of the L11 operon by binding to its mRNA. This is Large ribosomal subunit protein uL1 from Azoarcus sp. (strain BH72).